The sequence spans 270 residues: Regulatory protein RecX (270 aa).

Belongs to the RecX family.

It is found in the cytoplasm. In terms of biological role, modulates RecA activity. The polypeptide is Regulatory protein RecX (Bacillus cereus (strain B4264)).